Reading from the N-terminus, the 736-residue chain is Segment polarity protein dishevelled homolog DVL-2 (736 aa).

The region spanning 1–82 (MAETKVIYHL…RVVSWLASSE (82 aa)) is the DIX domain. A disordered region spans residues 79–241 (ASSEGSQPDS…PRLERTSSFS (163 aa)). Residues 100-114 (EPPPPVPPPIPPPPA) show a composition bias toward pro residues. The segment covering 149-160 (MRRDRVRRRESS) has biased composition (basic and acidic residues). The span at 181-195 (ESSSTLLTSEIETSI) shows a compositional bias: low complexity. Positions 205–217 (SRFSSSTEQSSAS) are enriched in polar residues. Over residues 219–231 (LLKRHRRRRKQRP) the composition is skewed to basic residues. Positions 254 to 326 (TVTLNMEKYN…NDDAVRVLRD (73 aa)) constitute a PDZ domain. An interaction with custos region spans residues 327–427 (IVHKPGPIVL…LASVVKVMAS (101 aa)). The DEP domain occupies 428 to 502 (PESGLEVRDR…SEQCYYIFGD (75 aa)). 2 stretches are compositionally biased toward low complexity: residues 574-593 (MGSAGSQHSEGSRSSGSNRS) and 616-629 (KSGSGSESEYSTRS). Positions 574-664 (MGSAGSQHSE…HPPSVHSYAA (91 aa)) are disordered.

It belongs to the DSH family. In terms of assembly, can form homomultimers. Interacts with prickle1. Interacts (via PDZ domain) with ccdc88c/dal and dact1-B/dpr. Interacts (via DIX domain) with ARP/Axin-related protein and dact1-A/frodo. Interacts with sdc4, possibly via fz7. Interacts directly (via DEP domain) with efnb1/ephrin-B1 and indirectly with the phosphorylated ephrin receptors ephb1 and ephb2, via association with SH domain-containing adapters. May interact with lrrc6. Interacts with custos (via NLS1 and NLS2); the interaction is negatively regulated by Wnt stimulation. In terms of processing, phosphorylated. Phosphorylation is controlled by frizzled proteins, correlates with the onset of embryo dorsalizing events and is higher in the dorsal half of early cleavage embryos. Phosphorylated on tyrosine residues in response to association with efnb1/ephrin-B1. Expressed equally in both animal-vegetal and dorsal-ventral directions of the early blastula. Becomes enriched on the dorsal side of the embryo after cortical rotation. Expressed along the anterior margin of eye field of neurulae (stage 16 embryos) and in the anterolateral crescent that borders the eye field. Continues to be expressed in the optic cup at stage 26. Expressed in the central nervous system throughout the early tailbud stage including the entire hindbrain.

The protein resides in the cytoplasm. It localises to the cytoplasmic vesicle. It is found in the cell projection. Its subcellular location is the cilium. The protein localises to the nucleus. The protein resides in the cell membrane. Its function is as follows. Involved in at least 2 independent signaling cascades, controlling cell fate via canonical Wnt signaling and cell polarity via a planar cell polarity (PCP) cascade. Acts synergistically with dal/dapple-like to activate Wnt signaling, stabilizing ctnnb1/beta-catenin and leading to dorsal axis formation. Also prevents degradation of ctnnb1/beta-catenin by displacing gsk3 from a complex with ARP/Axin-related protein. Has an additional role in anterior-posterior (A/P) axis formation, specifying different neuroectodermal cell fates along the A/P axis in a dose-dependent manner by activating several early patterning genes. In the PCP pathway, required at the cell membrane for PCP-mediated neural and mesodermal convergent extension during gastrulation and subsequent neural tube closure, acting to activate jnk. Also involved in blastopore closure and archenteron elongation during early, but not late, gastrulation. Associates with ephrin receptors and ligands and acts as part of a downstream PCP pathway to mediate ephrin-mediated cell repulsion via activation of rhoa. Required for efnb1/ephrin-B1-driven movement of non-retinal progenitor cells into the retina during eye field formation. Patterns the hindbrain. Required for ciliogenesis. Controls the docking of basal bodies to the apical plasma membrane; mediates the activation, but not localization of rhoa at the apical surface of ciliated cells during basal body docking. Furthermore, required for the association of basal bodies with membrane-bound vesicles and the vesicle-trafficking protein exoc4/sec8, and this association is in turn required for basal body docking. Once basal bodies are docked, required for the planar polarization of basal bodies that underlies ciliary beating and the directional fluid flow across ciliated epithelia. This is Segment polarity protein dishevelled homolog DVL-2 (dvl2) from Xenopus laevis (African clawed frog).